We begin with the raw amino-acid sequence, 211 residues long: Arginine exporter protein ArgO (211 aa).

Transmembrane regions (helical) follow at residues 1–21 (MISY…PLGP), 37–57 (LMIA…GIFG), 68–88 (LLAL…LGAL), 111–131 (IIAT…DTFV), 147–167 (WFAL…ALLA), and 179–199 (AQRI…FQLA).

It belongs to the LysE/ArgO transporter (TC 2.A.75) family.

It localises to the cell inner membrane. It carries out the reaction L-arginine(in) = L-arginine(out). Involved in the export of arginine. Important to control the intracellular level of arginine and the correct balance between arginine and lysine. The protein is Arginine exporter protein ArgO of Salmonella enteritidis PT4 (strain P125109).